We begin with the raw amino-acid sequence, 179 residues long: Large ribosomal subunit protein uL5 (179 aa).

This sequence belongs to the universal ribosomal protein uL5 family. In terms of assembly, part of the 50S ribosomal subunit; part of the 5S rRNA/L5/L18/L25 subcomplex. Contacts the 5S rRNA and the P site tRNA. Forms a bridge to the 30S subunit in the 70S ribosome.

In terms of biological role, this is one of the proteins that bind and probably mediate the attachment of the 5S RNA into the large ribosomal subunit, where it forms part of the central protuberance. In the 70S ribosome it contacts protein S13 of the 30S subunit (bridge B1b), connecting the 2 subunits; this bridge is implicated in subunit movement. Contacts the P site tRNA; the 5S rRNA and some of its associated proteins might help stabilize positioning of ribosome-bound tRNAs. In Bacillus pumilus (strain SAFR-032), this protein is Large ribosomal subunit protein uL5.